Consider the following 100-residue polypeptide: Spleen trypsin inhibitor I (100 aa).

A signal peptide spans methionine 1 to alanine 21. A propeptide spanning residues serine 22–lysine 33 is cleaved from the precursor. The 51-residue stretch at cysteine 40 to cysteine 90 folds into the BPTI/Kunitz inhibitor domain. 3 cysteine pairs are disulfide-bonded: cysteine 40/cysteine 90, cysteine 49/cysteine 73, and cysteine 65/cysteine 86. A propeptide is located at residue leucine 100.

It localises to the secreted. The chain is Spleen trypsin inhibitor I from Bos taurus (Bovine).